Here is a 1628-residue protein sequence, read N- to C-terminus: Centrosomal protein of 170 kDa protein B (1628 aa).

The 51-residue stretch at 23–73 (IFVGREDCELMLQSRSVDKQHAVINYDSDKDEHRVKDLGSLNGTFVNDVRI) folds into the FHA domain. Disordered stretches follow at residues 136–201 (EHGA…DMTQ), 329–369 (LIRR…SEDP), 415–504 (PRKK…GKNY), 566–586 (SDVR…DAGT), 637–659 (LASE…KLSN), 719–739 (EHQG…LPQL), 758–842 (ESQR…KKST), 1005–1084 (VSLV…LDFT), 1100–1341 (TVSS…EDEQ), 1379–1405 (AGDG…TPAS), 1443–1463 (GSTG…DPSK), and 1560–1628 (HLDV…TYIV). 2 stretches are compositionally biased toward basic and acidic residues: residues 147–156 (KQDKADKKAT) and 180–201 (KLDK…DMTQ). Over residues 421 to 434 (QSFTHNANSPQNDT) the composition is skewed to polar residues. Residues 436–453 (PVLKAKAEKRKGTLHVEK) show a composition bias toward basic and acidic residues. Positions 454-479 (VSTNGMGSTAPASKSLSSPSFPQRSN) are enriched in polar residues. Basic and acidic residues predominate over residues 481–490 (FRREKTEDRI). Basic and acidic residues-rich tracts occupy residues 758-773 (ESQR…RISE) and 817-828 (WKGEESHSREPS). A compositionally biased stretch (polar residues) spans 1005 to 1023 (VSLVSDKNVPSHSQKNRIV). Positions 1045-1056 (ARERLSEKRRTV) are enriched in basic and acidic residues. Polar residues predominate over residues 1129–1150 (RSSNAQKVQQALTRSNSLSTPR). Over residues 1176 to 1193 (SNISPGTSSANSSSAKSS) the composition is skewed to low complexity. Over residues 1216-1227 (NVPSDSETTSSV) the composition is skewed to polar residues. Composition is skewed to low complexity over residues 1261 to 1280 (TQKQ…SSST), 1312 to 1328 (ASTA…SRRQ), and 1381 to 1398 (DGDS…SISS). The span at 1564–1596 (PSSNKKTSSTILTSNPLSRTTNNSAARTESQTP) shows a compositional bias: polar residues. The segment covering 1606 to 1618 (SSSSSSRSPGSSF) has biased composition (low complexity).

This sequence belongs to the CEP170 family.

It is found in the cytoplasm. The protein resides in the cytoskeleton. Functionally, plays a role in microtubule organization. This is Centrosomal protein of 170 kDa protein B (cep170b) from Xenopus tropicalis (Western clawed frog).